The primary structure comprises 161 residues: Nucleotide-binding protein LHK_01423 (161 aa).

The protein belongs to the YajQ family.

Functionally, nucleotide-binding protein. This Laribacter hongkongensis (strain HLHK9) protein is Nucleotide-binding protein LHK_01423.